Here is a 57-residue protein sequence, read N- to C-terminus: MLNWVVTFLVIALIAGVLGFGGIAGASFEIAKIIFFIALILFVISAVVGFLRGRNRV.

2 helical membrane passes run 4 to 24 (WVVTFLVIALIAGVLGFGGIA) and 30 to 50 (IAKIIFFIALILFVISAVVGF).

This sequence belongs to the UPF0391 family.

It is found in the cell membrane. The protein is UPF0391 membrane protein Nwi_2359 of Nitrobacter winogradskyi (strain ATCC 25391 / DSM 10237 / CIP 104748 / NCIMB 11846 / Nb-255).